The primary structure comprises 289 residues: MKTLPAMLGTGKLFWVFFLIPYLDIWNIHGKESCDVQLYIKRQSEHSILAGDPFELECPVKYCANRPHVTWCKLNGTTCVKLEDRQTSWKEEKNISFFILHFEPVLPNDNGSYRCSANFQSNLIESHSTTLYVTDVKSASERPSKDEMASRPWLLYRLLPLGGLPLLITTCFCLFCCLRRHQGKQNELSDTAGREINLVDAHLKSEQTEASTRQNSQVLLSETGIYDNDPDLCFRMQEGSEVYSNPCLEENKPGIVYASLNHSVIGPNSRLARNVKEAPTEYASICVRS.

A signal peptide spans 1-30 (MKTLPAMLGTGKLFWVFFLIPYLDIWNIHG). The Ig-like V-type domain maps to 31-132 (KESCDVQLYI…LIESHSTTLY (102 aa)). At 31-157 (KESCDVQLYI…MASRPWLLYR (127 aa)) the chain is on the extracellular side. 3 cysteine pairs are disulfide-bonded: Cys34–Cys63, Cys58–Cys115, and Cys72–Cys79. 3 N-linked (GlcNAc...) asparagine glycosylation sites follow: Asn75, Asn94, and Asn110. A helical transmembrane segment spans residues 158 to 178 (LLPLGGLPLLITTCFCLFCCL). Residues 179 to 289 (RRHQGKQNEL…TEYASICVRS (111 aa)) are Cytoplasmic-facing.

In terms of assembly, interacts with tyrosine phosphatases PTPN6/SHP-1 and PTPN11/SHP-2. Interacts with TNFRSF14/HVEM (via cysteine-rich domain 1). Post-translationally, phosphorylated on Tyr residues by TNFRSF14 and by antigen receptors cross-linking, both inducing association with PTPN6 and PTPN11. N-glycosylated.

Its subcellular location is the cell membrane. Inhibitory receptor on lymphocytes that negatively regulates antigen receptor signaling via PTPN6/SHP-1 and PTPN11/SHP-2. May interact in cis (on the same cell) or in trans (on other cells) with TNFRSF14. In cis interactions, appears to play an immune regulatory role inhibiting in trans interactions in naive T cells to maintain a resting state. In trans interactions, can predominate during adaptive immune response to provide survival signals to effector T cells. In Homo sapiens (Human), this protein is B- and T-lymphocyte attenuator.